We begin with the raw amino-acid sequence, 420 residues long: Serine/threonine transporter SstT (420 aa).

The next 9 helical transmembrane spans lie at 14-34 (IMIGIVIGTTLGFLVPEWTFI), 40-60 (LFVGALKAIAPILVFVLIIAS), 71-91 (YVGSILVVYLLATFLAAVVAV), 172-192 (ITTVVQMIIGIAPIGILGLVF), 210-230 (LLLLIGTMAVVALVVYPAIVF), 283-303 (IPLGATINMGGAAITITIMTL), 309-329 (LGMSVPIYLALLLSIIAAVSA), 332-352 (ASGIAGGSLLLIPLACSLFGI), and 356-376 (IAMQVVGVGFIVGVVQDSIET).

This sequence belongs to the dicarboxylate/amino acid:cation symporter (DAACS) (TC 2.A.23) family.

Its subcellular location is the cell membrane. The enzyme catalyses L-serine(in) + Na(+)(in) = L-serine(out) + Na(+)(out). It carries out the reaction L-threonine(in) + Na(+)(in) = L-threonine(out) + Na(+)(out). Its function is as follows. Involved in the import of serine and threonine into the cell, with the concomitant import of sodium (symport system). The polypeptide is Serine/threonine transporter SstT (Enterococcus faecalis (strain ATCC 700802 / V583)).